Consider the following 342-residue polypeptide: MNSLVALVLLGQIIGSTLSSQVRGDLECDDKEAKNWADDAVRYINEHKLHGHKQALNVIKNICVVPWNGDLVAVFLELNLLETECHVLDPTPVEKCTVRQQHNHAVEMDCDAKIMFNVETFKRDVFVKCHSTPDSVENVRRNCSKCPILLPPNNPHVVDSVEYVLNKHNEKLSGHIYEVLEISRGQHKYEPEAYYLEFVIVEINCTAQEAHDDHHQCHPYTAGEDHIAFCRSTVFRSHASLEKPKDEKFESNCVILDVKDGHAHSHLIQQHIEKNSISPEHNITILNFVHPDDHTSTSHESHEHVAEVPVVFVKKELPTDISDHHTTPVKGCPGKVHHFKLY.

The first 19 residues, 1–19, serve as a signal peptide directing secretion; it reads MNSLVALVLLGQIIGSTLS. Cystatin fetuin-A-type domains are found at residues 22–130 and 141–254; these read VRGD…VKCH and RNCS…SNCV. Residues 23-25 carry the Cell attachment site motif; it reads RGD. An indispensable for metalloproteinase inhibition region spans residues 24 to 108; sequence GDLECDDKEA…RQQHNHAVEM (85 aa). 6 cysteine pairs are disulfide-bonded: C28–C332, C85–C96, C110–C129, C143–C146, C205–C217, and C230–C253. N142 carries N-linked (GlcNAc...) asparagine glycosylation. A glycan (N-linked (GlcNAc...) asparagine) is linked at N204. N282 carries N-linked (GlcNAc...) asparagine glycosylation.

It belongs to the fetuin family. Cys-63 may exist in a mixed disulfide form with a thiol compound such as glutathione. Expressed by the liver.

It is found in the secreted. Functionally, inhibits hemorrhagic and proteolytic activities of metalloproteinases (HR1A, HR1B, HR2a, HR2b and H2 proteinase from T.flavodidis and brevilysins H3, H4, H6 and L4 from A.halys brevicaudus). Has no effect on brevilysins H2. Has no effect on papain and cathepsin-B. This chain is Antihemorrhagic factor HSF, found in Protobothrops flavoviridis (Habu).